A 367-amino-acid chain; its full sequence is Glutamate 5-kinase (367 aa).

Lys-10 provides a ligand contact to ATP. Substrate contacts are provided by Ser-50, Asp-137, and Asn-149. ATP is bound by residues Thr-169–Asp-170 and Thr-211–Lys-217. Positions Ala-275–Glu-353 constitute a PUA domain.

It belongs to the glutamate 5-kinase family.

The protein localises to the cytoplasm. The enzyme catalyses L-glutamate + ATP = L-glutamyl 5-phosphate + ADP. It functions in the pathway amino-acid biosynthesis; L-proline biosynthesis; L-glutamate 5-semialdehyde from L-glutamate: step 1/2. In terms of biological role, catalyzes the transfer of a phosphate group to glutamate to form L-glutamate 5-phosphate. The chain is Glutamate 5-kinase from Shigella flexneri.